Consider the following 333-residue polypeptide: Fructose-1,6-bisphosphatase class 1 (333 aa).

Glutamate 92, aspartate 113, leucine 115, and aspartate 116 together coordinate Mg(2+). Substrate contacts are provided by residues 116-119, asparagine 209, tyrosine 242, and lysine 272; that span reads DGSS. Glutamate 278 is a binding site for Mg(2+).

This sequence belongs to the FBPase class 1 family. As to quaternary structure, homotetramer. Mg(2+) is required as a cofactor.

The protein localises to the cytoplasm. It catalyses the reaction beta-D-fructose 1,6-bisphosphate + H2O = beta-D-fructose 6-phosphate + phosphate. Its pathway is carbohydrate biosynthesis; Calvin cycle. The protein is Fructose-1,6-bisphosphatase class 1 of Chlorobium phaeovibrioides (strain DSM 265 / 1930) (Prosthecochloris vibrioformis (strain DSM 265)).